Consider the following 474-residue polypeptide: Bifunctional protein GlmU (474 aa).

The pyrophosphorylase stretch occupies residues 1-232 (MSALDVIIMA…ALQVAGVNSP (232 aa)). Residues Lys-23, Gln-78, 83–84 (GT), 105–107 (SGD), Gly-142, Glu-157, and Asn-230 each bind UDP-N-acetyl-alpha-D-glucosamine. Position 107 (Asp-107) interacts with Mg(2+). Asn-230 is a Mg(2+) binding site. A linker region spans residues 233-253 (LQLAELERAHQLAQARALMEQ). The interval 254 to 474 (GVRLADPARF…WQRPAKLPKA (221 aa)) is N-acetyltransferase. Arg-349 and Lys-367 together coordinate UDP-N-acetyl-alpha-D-glucosamine. Catalysis depends on His-379, which acts as the Proton acceptor. Positions 382 and 393 each coordinate UDP-N-acetyl-alpha-D-glucosamine. Acetyl-CoA is bound by residues Ala-396, 402–403 (NY), Ser-421, Gly-439, and Arg-456. The tract at residues 454–474 (VARGKQVTKENWQRPAKLPKA) is disordered.

The protein in the N-terminal section; belongs to the N-acetylglucosamine-1-phosphate uridyltransferase family. In the C-terminal section; belongs to the transferase hexapeptide repeat family. As to quaternary structure, homotrimer. The cofactor is Mg(2+).

The protein resides in the cytoplasm. The catalysed reaction is alpha-D-glucosamine 1-phosphate + acetyl-CoA = N-acetyl-alpha-D-glucosamine 1-phosphate + CoA + H(+). It catalyses the reaction N-acetyl-alpha-D-glucosamine 1-phosphate + UTP + H(+) = UDP-N-acetyl-alpha-D-glucosamine + diphosphate. The protein operates within nucleotide-sugar biosynthesis; UDP-N-acetyl-alpha-D-glucosamine biosynthesis; N-acetyl-alpha-D-glucosamine 1-phosphate from alpha-D-glucosamine 6-phosphate (route II): step 2/2. It participates in nucleotide-sugar biosynthesis; UDP-N-acetyl-alpha-D-glucosamine biosynthesis; UDP-N-acetyl-alpha-D-glucosamine from N-acetyl-alpha-D-glucosamine 1-phosphate: step 1/1. It functions in the pathway bacterial outer membrane biogenesis; LPS lipid A biosynthesis. Functionally, catalyzes the last two sequential reactions in the de novo biosynthetic pathway for UDP-N-acetylglucosamine (UDP-GlcNAc). The C-terminal domain catalyzes the transfer of acetyl group from acetyl coenzyme A to glucosamine-1-phosphate (GlcN-1-P) to produce N-acetylglucosamine-1-phosphate (GlcNAc-1-P), which is converted into UDP-GlcNAc by the transfer of uridine 5-monophosphate (from uridine 5-triphosphate), a reaction catalyzed by the N-terminal domain. The polypeptide is Bifunctional protein GlmU (Paracidovorax citrulli (strain AAC00-1) (Acidovorax citrulli)).